Here is a 146-residue protein sequence, read N- to C-terminus: Hemoglobin subunit beta (146 aa).

Positions Gln2–His146 constitute a Globin domain. Positions 63 and 92 each coordinate heme b.

This sequence belongs to the globin family. Heterotetramer of two alpha chains and two beta chains. Red blood cells.

Involved in oxygen transport from gills to the various peripheral tissues. This Pogonophryne scotti (Saddleback plunderfish) protein is Hemoglobin subunit beta (hbb).